A 176-amino-acid chain; its full sequence is Ribosome maturation factor RimM (176 aa).

Residues 97–176 (EDEFYWRDLI…QIIVDWDPDF (80 aa)) form the PRC barrel domain.

This sequence belongs to the RimM family. In terms of assembly, binds ribosomal protein uS19.

The protein resides in the cytoplasm. Its function is as follows. An accessory protein needed during the final step in the assembly of 30S ribosomal subunit, possibly for assembly of the head region. Essential for efficient processing of 16S rRNA. May be needed both before and after RbfA during the maturation of 16S rRNA. It has affinity for free ribosomal 30S subunits but not for 70S ribosomes. This chain is Ribosome maturation factor RimM, found in Shewanella amazonensis (strain ATCC BAA-1098 / SB2B).